Reading from the N-terminus, the 118-residue chain is Large ribosomal subunit protein uL18 (118 aa).

The protein belongs to the universal ribosomal protein uL18 family. In terms of assembly, part of the 50S ribosomal subunit; part of the 5S rRNA/L5/L18/L25 subcomplex. Contacts the 5S and 23S rRNAs.

Its function is as follows. This is one of the proteins that bind and probably mediate the attachment of the 5S RNA into the large ribosomal subunit, where it forms part of the central protuberance. The sequence is that of Large ribosomal subunit protein uL18 from Parvibaculum lavamentivorans (strain DS-1 / DSM 13023 / NCIMB 13966).